The following is a 222-amino-acid chain: Alpha-S2-casein (222 aa).

The N-terminal stretch at 1 to 15 (MKFFIFTCLLAVALA) is a signal peptide. Serine 23, serine 24, serine 25, serine 28, serine 46, serine 71, serine 72, serine 73, serine 76, serine 144, serine 146, serine 150, and serine 158 each carry phosphoserine. The segment at residues 76-140 (SAEVATEEVK…AVPITPTLNR (65 aa)) is a repeat. The segment at residues 158–222 (STEVFTKKTK…TKVIPYVRYL (65 aa)) is a repeat.

The protein belongs to the alpha-casein family. As to expression, mammary gland specific. Secreted in milk.

It is found in the secreted. Important role in the capacity of milk to transport calcium phosphate. Functionally, casocidin-I inhibits the growth of E.coli and S.carnosus. This is Alpha-S2-casein (CSN1S2) from Bos taurus (Bovine).